Reading from the N-terminus, the 181-residue chain is Dual-action ribosomal maturation protein DarP (181 aa).

Belongs to the DarP family.

The protein localises to the cytoplasm. Functionally, member of a network of 50S ribosomal subunit biogenesis factors which assembles along the 30S-50S interface, preventing incorrect 23S rRNA structures from forming. Promotes peptidyl transferase center (PTC) maturation. The polypeptide is Dual-action ribosomal maturation protein DarP (Actinobacillus succinogenes (strain ATCC 55618 / DSM 22257 / CCUG 43843 / 130Z)).